We begin with the raw amino-acid sequence, 351 residues long: Methylthioribose-1-phosphate isomerase (351 aa).

Substrate is bound by residues 53-55, Arg-96, and Gln-205; that span reads RGA. The Proton donor role is filled by Asp-246. 256 to 257 provides a ligand contact to substrate; sequence NK.

The protein belongs to the eIF-2B alpha/beta/delta subunits family. MtnA subfamily.

The enzyme catalyses 5-(methylsulfanyl)-alpha-D-ribose 1-phosphate = 5-(methylsulfanyl)-D-ribulose 1-phosphate. Its pathway is amino-acid biosynthesis; L-methionine biosynthesis via salvage pathway; L-methionine from S-methyl-5-thio-alpha-D-ribose 1-phosphate: step 1/6. Functionally, catalyzes the interconversion of methylthioribose-1-phosphate (MTR-1-P) into methylthioribulose-1-phosphate (MTRu-1-P). The protein is Methylthioribose-1-phosphate isomerase of Synechocystis sp. (strain ATCC 27184 / PCC 6803 / Kazusa).